The following is a 796-amino-acid chain: MQSIIGKHKDEGKITPEYLKKIDAYWRAANFISVGQLYLLDNPLLREPLKPEHLKRKVVGHWGTIPGQNFIYAHLNRVIKKYDLDMIYVSGPGHGGQVMVSNSYLDGTYSEVYPNVSRDLNGLKKLCKQFSFPGGISSHMAPETPGSINEGGELGYSLAHSFGAVFDNPDLITACVVGDGEAETGPLATSWQANKFLNPVTDGAVLPILHLNGYKISNPTVLSRIPKDELEKFFEGNGWKPYFVEGEDPETMHKLMAETLDIVTEEILNIQKNARENNDCSRPKWPMIVLRTPKGWTGPKFVDGVPNEGSFRAHQVPLAVDRYHTENLDQLEEWLKSYKPEELFDENYRLIPELEELTPKGNKRMAANLHANGGLLLRELRTPDFRDYAVDVPTPGSTVKQDMIELGKYVRDVVKLNEDTRNFRIFGPDETMSNRLWAVFEGTKRQWLSEIKEPNDEFLSNDGRIVDSMLSEHLCEGWLEGYLLTGRHGFFASYEAFLRIVDSMITQHGKWLKVTSQLPWRKDIASLNLIATSNVWQQDHNGYTHQDPGLLGHIVDKKPEIVRAYLPADANTLLAVFDKCLHTKHKINLLVTSKHPRQQWLTMDQAVKHVEQGISIWDWASNDKGQEPDVVIASCGDTPTLEALAAVTILHEHLPELKVRFVNVVDMMKLLPENEHPHGLSDKDYNALFTTDKPVIFAFHGFAHLINQLTYHRENRNLHVHGYMEEGTITTPFDMRVQNKLDRFNLVKDVVENLPQLGNRGAHLVQLMNDKLVEHNQYIREVGEDLPEITNWQWHV.

This sequence belongs to the XFP family. Thiamine diphosphate serves as cofactor.

In Clostridium acetobutylicum (strain ATCC 824 / DSM 792 / JCM 1419 / IAM 19013 / LMG 5710 / NBRC 13948 / NRRL B-527 / VKM B-1787 / 2291 / W), this protein is Probable phosphoketolase.